The primary structure comprises 257 residues: MVDAFGLWELNFPCSRVDDDDDEEEQITKEQEEQLCPQFVFSPQFSKDVGKTEPIECSVLVLGVGEVASTFLEVHFLCGNNSSVAAVISDKKTEKNFEYLVKNLRNKRSSLLHQLTRNNDVMVCQISSHVEQDKGFYWTQKIFSHIRPAKVVILTSSPASEYNSDDPSEIKTDFVKMMKTNAWSNSCAGPDITDIQTPNTVKGLAASVLTHCQIYKLPAALFMCYTESMHVDAQAVEAFRCKAPYKQSSMGLESGKL.

It belongs to the PSMG1 family. As to quaternary structure, forms a heterodimer with psmg2.

In terms of biological role, chaperone protein which promotes assembly of the 20S proteasome as part of a heterodimer with psmg2. This Nematostella vectensis (Starlet sea anemone) protein is Proteasome assembly chaperone 1 (psmg1).